The sequence spans 32 residues: Cytochrome b6-f complex subunit 7 (32 aa).

The helical transmembrane segment at 9–27 threads the bilayer; it reads AAVFWVLIPVGLAGGALLL.

It belongs to the PetM family. In terms of assembly, the 4 large subunits of the cytochrome b6-f complex are cytochrome b6, subunit IV (17 kDa polypeptide, PetD), cytochrome f and the Rieske protein, while the 4 small subunits are PetG, PetL, PetM and PetN. The complex functions as a dimer.

It is found in the cellular thylakoid membrane. In terms of biological role, component of the cytochrome b6-f complex, which mediates electron transfer between photosystem II (PSII) and photosystem I (PSI), cyclic electron flow around PSI, and state transitions. The sequence is that of Cytochrome b6-f complex subunit 7 from Prochlorococcus marinus (strain MIT 9303).